The primary structure comprises 733 residues: DNA-binding protein SATB2 (733 aa).

The disordered stretch occupies residues 1 to 47 (MERRSESPCLRDSPDRRSGSPDVKGPPPVKVARLEQNGSPMGARGRP). Residue Ser-20 is modified to Phosphoserine. Residues Lys-24 and Lys-30 each participate in a glycyl lysine isopeptide (Lys-Gly) (interchain with G-Cter in SUMO2) cross-link. At Ser-39 the chain carries Phosphoserine. Positions 57-158 (GLMIPVFCVV…VVTLKIQLQS (102 aa)) constitute a CMP domain. Lys-161 participates in a covalent cross-link: Glycyl lysine isopeptide (Lys-Gly) (interchain with G-Cter in SUMO2). A CUTL domain is found at 161-234 (KLEDLPAEQW…WYKKYKKIKV (74 aa)). Residue Lys-233 forms a Glycyl lysine isopeptide (Lys-Gly) (interchain with G-Cter in SUMO) linkage. Lys-350 participates in a covalent cross-link: Glycyl lysine isopeptide (Lys-Gly) (interchain with G-Cter in SUMO); alternate. Lys-350 is covalently cross-linked (Glycyl lysine isopeptide (Lys-Gly) (interchain with G-Cter in SUMO2); alternate). The CUT 1 DNA-binding region spans 350-437 (KPEPTNSSVE…ERDRIYQDER (88 aa)). The tract at residues 435 to 473 (DERERSMNPNVSMVSSASSSPSSSRTPQAKTSTPTTDLP) is disordered. Over residues 441–458 (MNPNVSMVSSASSSPSSS) the composition is skewed to low complexity. Ser-454 bears the Phosphoserine mark. Positions 459–470 (RTPQAKTSTPTT) are enriched in polar residues. Position 467 is a phosphothreonine (Thr-467). Positions 473–560 (PIKVDGANIN…ERDVIYEEES (88 aa)) form a DNA-binding region, CUT 2. Lys-475 participates in a covalent cross-link: Glycyl lysine isopeptide (Lys-Gly) (interchain with G-Cter in SUMO2). The segment covering 580-593 (QVLHRQQSQPAKES) has biased composition (low complexity). 2 disordered regions span residues 580–617 (QVLHRQQSQPAKESSPPREEAPPPPPPTEDSCAKKPRS) and 694–733 (LLTESEENDSEEGSEEMYKVEAEEENADKSKAAPAEIDQR). Ser-594 carries the post-translational modification Phosphoserine. The homeobox DNA-binding region spans 615–674 (PRSRTKISLEALGILQSFIHDVGLYPDQEAIHTLSAQLDLPKHTIIKFFQNQRYHVKHHG). Over residues 694–708 (LLTESEENDSEEGSE) the composition is skewed to acidic residues. Over residues 709–733 (EMYKVEAEEENADKSKAAPAEIDQR) the composition is skewed to basic and acidic residues. A Glycyl lysine isopeptide (Lys-Gly) (interchain with G-Cter in SUMO2) cross-link involves residue Lys-724.

It belongs to the CUT homeobox family. As to quaternary structure, interacts with ATF4 and RUNX2; resulting in enhanced DNA binding and transactivation by these transcription factors. Interacts with PIAS1. In terms of processing, sumoylated by PIAS1. Sumoylation promotes nuclear localization, but represses transcription factor activity. In terms of tissue distribution, high expression in adult brain, moderate expression in fetal brain, and weak expression in adult liver, kidney, and spinal cord and in select brain regions, including amygdala, corpus callosum, caudate nucleus, and hippocampus.

The protein localises to the nucleus matrix. In terms of biological role, binds to DNA, at nuclear matrix- or scaffold-associated regions. Thought to recognize the sugar-phosphate structure of double-stranded DNA. Transcription factor controlling nuclear gene expression, by binding to matrix attachment regions (MARs) of DNA and inducing a local chromatin-loop remodeling. Acts as a docking site for several chromatin remodeling enzymes and also by recruiting corepressors (HDACs) or coactivators (HATs) directly to promoters and enhancers. Required for the initiation of the upper-layer neurons (UL1) specific genetic program and for the inactivation of deep-layer neurons (DL) and UL2 specific genes, probably by modulating BCL11B expression. Repressor of Ctip2 and regulatory determinant of corticocortical connections in the developing cerebral cortex. May play an important role in palate formation. Acts as a molecular node in a transcriptional network regulating skeletal development and osteoblast differentiation. This is DNA-binding protein SATB2 (SATB2) from Homo sapiens (Human).